Here is a 265-residue protein sequence, read N- to C-terminus: UPF0026 protein slr1464 (265 aa).

A Radical SAM core domain is found at 16–252; the sequence is RYGRSLGIDP…QNLAKKISGA (237 aa). [4Fe-4S] cluster contacts are provided by C32, C36, and C39. Residues 204–230 are disordered; the sequence is RPTRPKPLQRELEGRGNHTGTPYGDRP.

It belongs to the UPF0026 family. The cofactor is [4Fe-4S] cluster.

In Synechocystis sp. (strain ATCC 27184 / PCC 6803 / Kazusa), this protein is UPF0026 protein slr1464.